The chain runs to 132 residues: MALLLTMVIALTCLGGFASPSPVPPSTALKELIEELVNITQNQKAPLCNGSMVWSINLTAGVYCAALESLINVSGCSAIEKTQRMLNGFCPHKVSAGQFSSLRVRDTKIEVAQFVKDLLLHLKKLFREGQFN.

The N-terminal stretch at 1–18 (MALLLTMVIALTCLGGFA) is a signal peptide. Asn38, Asn49, Asn57, and Asn72 each carry an N-linked (GlcNAc...) asparagine glycan. Intrachain disulfides connect Cys48/Cys76 and Cys64/Cys90.

Belongs to the IL-4/IL-13 family. As to quaternary structure, interacts with IL13RA2.

The protein resides in the secreted. Functionally, cytokine that plays important roles in allergic inflammation and immune response to parasite infection. Synergizes with IL2 in regulating interferon-gamma synthesis. Stimulates B-cell proliferation, and activation of eosinophils, basophils, and mast cells. Plays an important role in controlling IL33 activity by modulating the production of transmembrane and soluble forms of interleukin-1 receptor-like 1/IL1RL1. Displays the capacity to antagonize Th1-driven proinflammatory immune response and downregulates synthesis of many proinflammatory cytokines including IL1, IL6, IL10, IL12 and TNF-alpha through a mechanism that partially involves suppression of NF-kappa-B. Also functions on nonhematopoietic cells, including endothelial cells where it induces vascular cell adhesion protein 1/VCAM1, which is important in the recruitment of eosinophils. Exerts its biological effects through its receptors which comprises the IL4R chain and the IL13RA1 chain, to activate JAK1 and TYK2, leading to the activation of STAT6. Aside from IL13RA1, another receptor IL13RA2 acts as a high affinity decoy for IL13 and mediates internalization and depletion of extracellular IL13. This chain is Interleukin-13 (IL13), found in Macaca thibetana (Pere David's macaque).